The primary structure comprises 431 residues: Probable zinc metalloprotease Lema_P086240 (431 aa).

A glycan (N-linked (GlcNAc...) asparagine) is linked at Asn46. Residues His117, Asp137, and Glu170 each coordinate Zn(2+). An N-linked (GlcNAc...) asparagine glycan is attached at Asn185. Residue Asp197 coordinates Zn(2+). N-linked (GlcNAc...) asparagine glycosylation is found at Asn258, Asn310, Asn349, Asn359, and Asn369. The Fibronectin type-III domain maps to 344 to 431 (PGMPRNVTID…KSPAVYPFPG (88 aa)).

The protein belongs to the peptidase M28 family. M28B subfamily. Zn(2+) serves as cofactor.

Its subcellular location is the secreted. In Leptosphaeria maculans (strain JN3 / isolate v23.1.3 / race Av1-4-5-6-7-8) (Blackleg fungus), this protein is Probable zinc metalloprotease Lema_P086240.